The sequence spans 1801 residues: MAVPGSFPLLVEGSWGPDPPKNLNTKLQMYFQSPKRSGGGECEVRQDPRSPSRFLVFFYPEDVRQKVLERKNHELVWQGKGTFKLTVQLPATPDEIDHVFEEELLTKESKTKEDVKEPDVSEELDTKLPLDGGLDKMEDIPEECENISSLVAFENLKANVTDIMLILLVENISGLSNDDFQVEIIRDFDVAVVTFQKHIDTIRFVDDCTKHHSIKQLQLSPRLLEVTNTIRVENLPPGADDYSLKLFFENPYNGGGRVANVEYFPEESSALIEFFDRKVLDTIMATKLDFNKMPLSVFPYYASLGTALYGKEKPLIKLPAPFEESLDLPLWKFLQKKNHLIEEINDEMRRCHCELTWSQLSGKVTIRPAATLVNEGRPRIKTWQADTSTTLSSIRSKYKVNPIKVDPTMWDTIKNDVKDDRILIEFDTLKEMVILAGKSEDVQSIEVQVRELIESTTQKIKREEQSLKEKMIISPGRYFLLCHSSLLDHLLTECPEIEICYDRVTQHLCLKGPSADVYKAKCEIQEKVYTMAQKNIQVSPEIFQFLQQVNWKEFSKCLFIAQKILALYELEGTTVLLTSCSSEALLEAEKQMLSALNYKRIEVENKEVLHGKKWKGLTHNLLKKQNSSPNTVIINELTSETTAEVIITGCVKEVNETYKLLFNFVEQNMKIERLVEVKPSLVIDYLKTEKKLFWPKIKKVNVQVSFNPENKQKGILLTGSKTEVLKAVDIVKQVWDSVCVKSVHTDKPGAKQFFQDKARFYQSEIKRLFGCYIELQENEVMKEGGSPAGQKCFSRTVLAPGVVLIVQQGDLARLPVDVVVNASNEDLKHYGGLAAALSKAAGPELQADCDQIVKREGRLLPGNATISKAGKLPYHHVIHAVGPRWSGYEAPRCVYLLRRAVQLSLCLAEKYKYRSIAIPAISSGVFGFPLGRCVETIVSAIKENFQFKKDGHCLKEIYLVDVSEKTVEAFAEAVKTVFKATLPDTAAPPGLPPAAAGPGKTSWEKGSLVSPGGLQMLLVKEGVQNAKTDVVVNSVPLDLVLSRGPLSKSLLEKAGPELQEELDTVGQGVAVSMGTVLKTSSWNLDCRYVLHVVAPEWRNGSTSSLKIMEDIIRECMEITESLSLKSIAFPAIGTGNLGFPKNIFAELIISEVFKFSSKNQLKTLQEVHFLLHPSDHENIQAFSDEFARRANGNLVSDKIPKAKDTQGFYGTVSSPDSGVYEMKIGSIIFQVASGDITKEEADVIVNSTSNSFNLKAGVSKAILECAGQNVERECSQQAQQRKNDYIITGGGFLRCKNIIHVIGGNDVKSSVSSVLQECEKKNYSSICLPAIGTGNAKQHPDKVAEAIIDAIEDFVQKGSAQSVKKVKVVIFLPQVLDVFYANMKKREGTQLSSQQSVMSKLASFLGFSKQSPQKKNHLVLEKKTESATFRVCGENVTCVEYAISWLQDLIEKEQCPYTSEDECIKDFDEKEYQELNELQKKLNINISLDHKRPLIKVLGISRDVMQARDEIEAMIKRVRLAKEQESRADCISEFIEWQYNDNNTSHCFNKMTNLKLEDARREKKKTVDVKINHRHYTVNLNTYTATDTKGHSLSVQRLTKSKVDIPAHWSDMKQQNFCVVELLPSDPEYNTVASKFNQTCSHFRIEKIERIQNPDLWNSYQAKKKTMDAKNGQTMNEKQLFHGTDAGSVPHVNRNGFNRSYAGKNAVAYGKGTYFAVNANYSANDTYSRPDANGRKHVYYVRVLTGIYTHGNHSLIVPPSKNPQNPTDLYDTVTDNVHHPSLFVAFYDYQAYPEYLITFRK.

Ser33 carries the phosphoserine modification. The segment at Ser109–Gly132 is disordered. 3 consecutive Macro domains span residues Lys791 to Phe978, Trp1003 to Ala1190, and Asp1216 to Glu1387. Residues Asn824, Leu833, Ser922–Phe926, Asp961, Val1023–Gln1024, Ser1034, Leu1046–Ser1049, Gly1133–Leu1137, Asp1175–Asn1178, Asp1235–Ile1236, Ser1247, Val1258, Gly1332–Ala1336, and Phe1371 contribute to the a glycoprotein site. 2 positions are modified to phosphoserine: Ser1403 and Ser1411. One can recognise a WWE domain in the interval Glu1523–Ser1601. The PARP catalytic domain occupies Ile1605–Lys1801.

This sequence belongs to the ARTD/PARP family. In terms of assembly, interacts with STAT6. Interacts with PARP10. Interacts with PARP9 in IFNG-stimulated macrophages; the interaction prevents PARP14-mediated STAT1 and STAT6 ADP-riboslylation. Auto-ADP-ribosylated. Expressed in macrophages.

The protein localises to the nucleus. Its subcellular location is the cytoplasm. The catalysed reaction is L-glutamyl-[protein] + NAD(+) = 5-O-(ADP-D-ribosyl)-L-glutamyl-[protein] + nicotinamide. ADP-ribosyltransferase that mediates mono-ADP-ribosylation of glutamate residues on target proteins. In contrast to PARP1 and PARP2, it is not able to mediate poly-ADP-ribosylation. Has been shown to catalyze the mono-ADP-ribosylation of STAT1 at 'Glu-657' and 'Glu-705', thus decreasing STAT1 phosphorylation which negatively regulates pro-inflammatory cytokine production in macrophages in response to IFNG stimulation. However, the role of ADP-ribosylation in the prevention of STAT1 phosphorylation has been called into question and it has been suggested that the inhibition of phosphorylation may be the result of sumoylation of STAT1 'Lys-703'. Mono-ADP-ribosylates STAT6; enhancing STAT6-dependent transcription. In macrophages, positively regulates MRC1 expression in response to IL4 stimulation by promoting STAT6 phosphorylation. Mono-ADP-ribosylates PARP9. The sequence is that of Protein mono-ADP-ribosyltransferase PARP14 from Homo sapiens (Human).